A 263-amino-acid chain; its full sequence is Type II restriction enzyme TthHB8I (263 aa).

It catalyses the reaction Endonucleolytic cleavage of DNA to give specific double-stranded fragments with terminal 5'-phosphates.. In terms of biological role, a P subtype restriction enzyme that recognizes the double-stranded sequence 5'-TCGA-3' and cleaves after T-1. This is Type II restriction enzyme TthHB8I (tthHB8IR) from Thermus thermophilus (strain ATCC 27634 / DSM 579 / HB8).